The sequence spans 132 residues: Small ribosomal subunit protein uS8 (132 aa).

Belongs to the universal ribosomal protein uS8 family. As to quaternary structure, part of the 30S ribosomal subunit. Contacts proteins S5 and S12.

Functionally, one of the primary rRNA binding proteins, it binds directly to 16S rRNA central domain where it helps coordinate assembly of the platform of the 30S subunit. The sequence is that of Small ribosomal subunit protein uS8 from Clavibacter michiganensis subsp. michiganensis (strain NCPPB 382).